Reading from the N-terminus, the 122-residue chain is Serum amyloid A-2 protein (122 aa).

An N-terminal signal peptide occupies residues Met1–Gly18. Gln19 bears the Pyrrolidone carboxylic acid mark. The interval Gly90 to Tyr122 is disordered. The span at Arg105–Tyr122 shows a compositional bias: basic and acidic residues.

This sequence belongs to the SAA family. In terms of assembly, apolipoprotein of the HDL complex. Expressed by the liver; secreted in plasma.

It is found in the secreted. Its function is as follows. Major acute phase reactant. This Oryctolagus cuniculus (Rabbit) protein is Serum amyloid A-2 protein (SAA2).